Reading from the N-terminus, the 377-residue chain is CaM kinase-like vesicle-associated protein (377 aa).

A Protein kinase domain is found at 24 to 287; that stretch reads YDLGQLIKTE…AADAISHEWI (264 aa). Residues 324-377 form a disordered region; sequence MKRLRAPEQTDPGTPSPSKDSDKTPSMATPAPSPANTPAEGAPSLPCPSPDTTG. The span at 347 to 362 shows a compositional bias: low complexity; it reads TPSMATPAPSPANTPA. Residues 368 to 377 show a composition bias toward pro residues; sequence LPCPSPDTTG.

The protein belongs to the protein kinase superfamily. CAMK Ser/Thr protein kinase family. As to quaternary structure, interacts with calmodulin, in the presence of calcium. The cofactor is Ca(2+).

The protein localises to the cytoplasmic vesicle membrane. Does not appear to have detectable kinase activity. This Xenopus laevis (African clawed frog) protein is CaM kinase-like vesicle-associated protein (camkv).